The chain runs to 455 residues: Bifunctional protein GlmU (455 aa).

Residues 1-230 form a pyrophosphorylase region; sequence MANRFAVILA…FDETIGINDR (230 aa). Residues 9 to 12, lysine 23, glutamine 73, and 78 to 79 each bind UDP-N-acetyl-alpha-D-glucosamine; these read LAAG and GT. Mg(2+) is bound at residue aspartate 103. UDP-N-acetyl-alpha-D-glucosamine contacts are provided by glycine 140, glutamate 155, asparagine 170, and asparagine 228. Asparagine 228 contacts Mg(2+). The tract at residues 231-251 is linker; it reads IALAEAEKIMKKRINEQHMRN. Residues 252-455 are N-acetyltransferase; sequence GVSIIDPEQT…KEEYASKFKK (204 aa). UDP-N-acetyl-alpha-D-glucosamine is bound by residues arginine 333 and lysine 351. The Proton acceptor role is filled by histidine 363. Residues tyrosine 366 and asparagine 377 each coordinate UDP-N-acetyl-alpha-D-glucosamine. Acetyl-CoA is bound by residues 386 to 387, alanine 423, and arginine 440; that span reads NY.

This sequence in the N-terminal section; belongs to the N-acetylglucosamine-1-phosphate uridyltransferase family. In the C-terminal section; belongs to the transferase hexapeptide repeat family. As to quaternary structure, homotrimer. The cofactor is Mg(2+).

Its subcellular location is the cytoplasm. It catalyses the reaction alpha-D-glucosamine 1-phosphate + acetyl-CoA = N-acetyl-alpha-D-glucosamine 1-phosphate + CoA + H(+). The enzyme catalyses N-acetyl-alpha-D-glucosamine 1-phosphate + UTP + H(+) = UDP-N-acetyl-alpha-D-glucosamine + diphosphate. It participates in nucleotide-sugar biosynthesis; UDP-N-acetyl-alpha-D-glucosamine biosynthesis; N-acetyl-alpha-D-glucosamine 1-phosphate from alpha-D-glucosamine 6-phosphate (route II): step 2/2. The protein operates within nucleotide-sugar biosynthesis; UDP-N-acetyl-alpha-D-glucosamine biosynthesis; UDP-N-acetyl-alpha-D-glucosamine from N-acetyl-alpha-D-glucosamine 1-phosphate: step 1/1. It functions in the pathway bacterial outer membrane biogenesis; LPS lipid A biosynthesis. In terms of biological role, catalyzes the last two sequential reactions in the de novo biosynthetic pathway for UDP-N-acetylglucosamine (UDP-GlcNAc). The C-terminal domain catalyzes the transfer of acetyl group from acetyl coenzyme A to glucosamine-1-phosphate (GlcN-1-P) to produce N-acetylglucosamine-1-phosphate (GlcNAc-1-P), which is converted into UDP-GlcNAc by the transfer of uridine 5-monophosphate (from uridine 5-triphosphate), a reaction catalyzed by the N-terminal domain. In Oceanobacillus iheyensis (strain DSM 14371 / CIP 107618 / JCM 11309 / KCTC 3954 / HTE831), this protein is Bifunctional protein GlmU.